The chain runs to 504 residues: Probable alpha-L-arabinofuranosidase C (504 aa).

3 N-linked (GlcNAc...) asparagine glycosylation sites follow: N152, N181, and N269.

The protein belongs to the glycosyl hydrolase 51 family.

The protein localises to the secreted. It carries out the reaction Hydrolysis of terminal non-reducing alpha-L-arabinofuranoside residues in alpha-L-arabinosides.. Its pathway is glycan metabolism; L-arabinan degradation. Its function is as follows. Alpha-L-arabinofuranosidase involved in the degradation of arabinoxylan, a major component of plant hemicellulose. Acts only on small linear 1,5-alpha-linked L-arabinofuranosyl oligosaccharides. The sequence is that of Probable alpha-L-arabinofuranosidase C (abfC) from Aspergillus flavus (strain ATCC 200026 / FGSC A1120 / IAM 13836 / NRRL 3357 / JCM 12722 / SRRC 167).